The primary structure comprises 196 residues: CASP-like protein 1D1 (196 aa).

Basic and acidic residues predominate over residues 1–18; that stretch reads MASTDKPDRESIKSEEAP. The interval 1–22 is disordered; the sequence is MASTDKPDRESIKSEEAPAAHP. Over 1–29 the chain is Cytoplasmic; sequence MASTDKPDRESIKSEEAPAAHPRRSNYSS. The helical transmembrane segment at 30–50 threads the bilayer; sequence VHVALRFLLFAASVTAVVVMV. The Extracellular segment spans residues 51 to 84; that stretch reads TAKQTKIVPVPGLPISVPLEAKFSDSPAFLYFIS. The helical transmembrane segment at 85 to 105 threads the bilayer; it reads ALSVAGLYGILTTLAAISIVL. The Cytoplasmic portion of the chain corresponds to 106–112; that stretch reads KPAYATR. The chain crosses the membrane as a helical span at residues 113 to 133; the sequence is FLLHFALLDVLMLGIVASATG. Residues 134-167 lie on the Extracellular side of the membrane; it reads AAGGVAYVGLKGNSHVRWGKVCNVYDKFCQHVGS. Residues 168-188 traverse the membrane as a helical segment; sequence SIAVALFASVLLVLLTMLSVF. Residues 189 to 196 are Cytoplasmic-facing; sequence SIYRKIPK.

Belongs to the Casparian strip membrane proteins (CASP) family. As to quaternary structure, homodimer and heterodimers.

The protein resides in the cell membrane. In Populus trichocarpa (Western balsam poplar), this protein is CASP-like protein 1D1.